Here is a 434-residue protein sequence, read N- to C-terminus: Cullin-like protein 5 (434 aa).

The tract at residues 1 to 34 (MKRSISPDPFSSTKSPKLVHHSPDDGGAEGNPYR) is disordered.

The protein belongs to the cullin family.

The polypeptide is Cullin-like protein 5 (Arabidopsis thaliana (Mouse-ear cress)).